The primary structure comprises 346 residues: MTNKKIKLTQTVKAAGUAAKLGPEGLADALAGLNRPADPRLIVGPETSDDGGVYCLTPEIALIESCDVITPPADAPRAFGRIAAANALSDIYAMGGRPLTAMNLAFFPACSLQPEVLGEVLAGGQDALNEAGCCLVGGHTVEDDELKYGLSVTGTVHPEQVLRNSTARPGDCLLLTKPLGSGILSTAVKGEMATVEQEAEAVAWMSLLNRAAAELMLRYTPSACTDITGFGLIGHSCEMALGSGVTIRLYLDAVPLMQGVTDQVADGMVPAGCYRNRSYYLSRIDAGDCDPERLLPLFDPQTSGGLLIALQPGAAALFQAEAAENSIFCVLIGDVLPRAELPVIVV.

Sec-17 is a catalytic residue. Sec-17 is a non-standard amino acid (selenocysteine). Residues Lys-20 and 47–49 each bind ATP; that span reads TSD. Asp-50 is a binding site for Mg(2+). ATP-binding positions include Asp-67, Asp-90, and 138–140; that span reads GHT. Asp-90 lines the Mg(2+) pocket. Asp-226 is a binding site for Mg(2+).

The protein belongs to the selenophosphate synthase 1 family. Class I subfamily. As to quaternary structure, homodimer. It depends on Mg(2+) as a cofactor.

The catalysed reaction is hydrogenselenide + ATP + H2O = selenophosphate + AMP + phosphate + 2 H(+). Synthesizes selenophosphate from selenide and ATP. The sequence is that of Selenide, water dikinase from Trichlorobacter lovleyi (strain ATCC BAA-1151 / DSM 17278 / SZ) (Geobacter lovleyi).